The sequence spans 65 residues: Large ribosomal subunit protein uL30 (65 aa).

The protein belongs to the universal ribosomal protein uL30 family. In terms of assembly, part of the 50S ribosomal subunit.

This is Large ribosomal subunit protein uL30 from Aster yellows witches'-broom phytoplasma (strain AYWB).